Here is a 321-residue protein sequence, read N- to C-terminus: Auxin-responsive protein IAA8 (321 aa).

The EAR-like (transcriptional repression) motif lies at 54 to 58 (LRLGL). A PB1 domain is found at 199–301 (VLFVKVSMDG…TCQKLKIMKG (103 aa)).

Belongs to the Aux/IAA family. In terms of assembly, homodimers and heterodimers. Interacts with TPL. In terms of tissue distribution, highly expressed in the whole plant.

The protein resides in the nucleus. Its function is as follows. Aux/IAA proteins are short-lived transcriptional factors that function as repressors of early auxin response genes at low auxin concentrations. Repression is thought to result from the interaction with auxin response factors (ARFs), proteins that bind to the auxin-responsive promoter element (AuxRE). Formation of heterodimers with ARF proteins may alter their ability to modulate early auxin response genes expression. This is Auxin-responsive protein IAA8 (IAA8) from Arabidopsis thaliana (Mouse-ear cress).